Here is a 306-residue protein sequence, read N- to C-terminus: Myb family transcription factor MOF1 (306 aa).

Positions 19-79 (RSKVPRLRWT…HLQMYRCSRL (61 aa)) constitute an HTH myb-type domain. The H-T-H motif DNA-binding region spans 50–75 (PKLILQLMGVKGLTISHVKSHLQMYR).

In terms of assembly, interacts with TPR1, TPR2 and TPR3. As to expression, expressed in roots, leaves, leaf sheaths, culms, panicles, lemmas, paleas, lodicules, stamens, and pistils.

The protein resides in the nucleus. Functionally, transcriptional repressor that plays a role in the regulation of organ identity and spikelet meristem determinacy. Interacts with the TPR corepressors to possibly repress the expression of downstream target genes. The chain is Myb family transcription factor MOF1 from Oryza sativa subsp. japonica (Rice).